The primary structure comprises 688 residues: Transcriptional regulatory protein GAT1 (688 aa).

Disordered regions lie at residues 83–125 (NHNS…SPMI), 259–278 (TSAS…NNSS), 343–438 (FTGI…GVSC), 482–565 (IKKR…NLDK), and 639–678 (LMTM…TANN). The span at 259 to 271 (TSASITSPTSTFS) shows a compositional bias: low complexity. Residues 359–368 (FDNKPKDDHF) show a composition bias toward basic and acidic residues. Over residues 369–379 (NTSLSVSQQQP) the composition is skewed to polar residues. A compositionally biased stretch (basic residues) spans 382 to 397 (KKSKRKSTITKSKKKA). Positions 402–428 (TTITSTGSTITTKSTNSNSTGKGTATG) are enriched in low complexity. The segment at 438 to 462 (CTNCGTKTTPLWRRNPQGQPLCNAC) adopts a GATA-type zinc-finger fold. 5 stretches are compositionally biased toward low complexity: residues 488-510 (GNNN…NNKS), 529-543 (TNNT…SKSP), 552-565 (FDNN…NLDK), 639-654 (LMTM…LSTT), and 662-678 (NNEG…TANN).

Its subcellular location is the nucleus. In terms of biological role, transcriptional regulator of nitrogen utilization required for nitrogen catabolite repression and utilization of isoleucine, tyrosine and tryptophan as nitrogen sources. Controls expression of the MEP2 ammonium permease, the DUR1,2 urea amidolyase, and the transcription factor STP1, which in turn mediates SAP2 expression, a long-known virulence attribute of C.albicans. Influences the filamentation process depending upon the nitrogen sources available. Required for virulence in a mouse systemic infection model. This is Transcriptional regulatory protein GAT1 (GAT1) from Candida albicans (strain SC5314 / ATCC MYA-2876) (Yeast).